Consider the following 84-residue polypeptide: Small ribosomal subunit protein uS17 (84 aa).

This sequence belongs to the universal ribosomal protein uS17 family. Part of the 30S ribosomal subunit.

One of the primary rRNA binding proteins, it binds specifically to the 5'-end of 16S ribosomal RNA. This chain is Small ribosomal subunit protein uS17, found in Moorella thermoacetica (strain ATCC 39073 / JCM 9320).